Here is a 425-residue protein sequence, read N- to C-terminus: Aromatic prenyl transferase ptmE (425 aa).

Residues 83-84 (GI) and glutamate 92 each bind L-tryptophan. Substrate contacts are provided by arginine 107, lysine 198, tyrosine 200, arginine 265, lysine 267, tyrosine 269, tyrosine 345, tyrosine 410, and tyrosine 414.

The protein belongs to the tryptophan dimethylallyltransferase family. In terms of assembly, homodimer.

Its pathway is secondary metabolite biosynthesis. In terms of biological role, aromatic prenyl transferase; part of the gene cluster that mediates the biosynthesis of the indole diterpenes penitrems. The geranylgeranyl diphosphate (GGPP) synthase ptmG catalyzes the first step in penitrem biosynthesis via conversion of farnesyl pyrophosphate and isopentyl pyrophosphate into geranylgeranyl pyrophosphate (GGPP). Condensation of indole-3-glycerol phosphate with GGPP by the prenyl transferase ptmC then forms 3-geranylgeranylindole (3-GGI). Epoxidation by the FAD-dependent monooxygenase ptmM leads to a epoxidized-GGI that is substrate of the terpene cyclase ptmB for cyclization to yield paspaline. Paspaline is subsequently converted to 13-desoxypaxilline by the cytochrome P450 monooxygenase ptmP, the latter being then converted to paxilline by the cytochrome P450 monooxygenase ptmQ. Paxilline is converted to beta-paxitriol via C-10 ketoreduction by the short-chain dehydrogenase ptmH which can be monoprenylated at the C-20 by the indole diterpene prenyltransferase ptmD. A two-step elimination (acetylation and elimination) process performed by the O-acetyltransferase ptmV and ptmI leads to the production of the prenylated form of penijanthine. The FAD-linked oxidoreductase ptmO then converts the prenylated form of penijanthine into PC-M5 which is in turn transformed into PC-M4 by the aromatic dimethylallyltransferase ptmE. Five sequential oxidative transformations performed by the cytochrome P450 monooxygenases ptmK, ptmU, ptmL, ptmN and ptmJ yield the various penitrem compounds. PtmK, ptmU and ptmM are involved in the formation of the key bicyclic ring of penitrem C via the formation of the intermediates secopenitrem D and penitrem D. PtmL catalyzes the epoxidation of penitrem D and C to yield penitrem B and F, respectively. PtmJ catalyzes the last benzylic hydroxylation to convert penitrem B to prenitrem E and penitrem F to penitrem A. In Penicillium ochrochloron, this protein is Aromatic prenyl transferase ptmE.